The chain runs to 211 residues: Proteasome subunit beta 1 (211 aa).

Positions methionine 1 to glycine 17 are cleaved as a propeptide — removed in mature form; by autocatalysis. Catalysis depends on threonine 18, which acts as the Nucleophile.

Belongs to the peptidase T1B family. As to quaternary structure, the 20S proteasome core is composed of 14 alpha and 14 beta subunits that assemble into four stacked heptameric rings, resulting in a barrel-shaped structure. The two inner rings, each composed of seven catalytic beta subunits, are sandwiched by two outer rings, each composed of seven alpha subunits. The catalytic chamber with the active sites is on the inside of the barrel. Has a gated structure, the ends of the cylinder being occluded by the N-termini of the alpha-subunits. Is capped at one or both ends by the proteasome regulatory ATPase, PAN.

It localises to the cytoplasm. It carries out the reaction Cleavage of peptide bonds with very broad specificity.. Its activity is regulated as follows. The formation of the proteasomal ATPase PAN-20S proteasome complex, via the docking of the C-termini of PAN into the intersubunit pockets in the alpha-rings, triggers opening of the gate for substrate entry. Interconversion between the open-gate and close-gate conformations leads to a dynamic regulation of the 20S proteasome proteolysis activity. In terms of biological role, component of the proteasome core, a large protease complex with broad specificity involved in protein degradation. The polypeptide is Proteasome subunit beta 1 (Saccharolobus islandicus (strain M.16.27) (Sulfolobus islandicus)).